Here is a 61-residue protein sequence, read N- to C-terminus: Weak toxin CM-2 (61 aa).

Disulfide bonds link Cys3/Cys21, Cys14/Cys37, Cys41/Cys53, and Cys54/Cys59.

The protein belongs to the three-finger toxin family. Short-chain subfamily. Orphan group VI sub-subfamily. Expressed by the venom gland.

Its subcellular location is the secreted. This is Weak toxin CM-2 from Naja haje haje (Egyptian cobra).